A 99-amino-acid polypeptide reads, in one-letter code: Cell division topological specificity factor (99 aa).

The protein belongs to the MinE family.

Functionally, prevents the cell division inhibition by proteins MinC and MinD at internal division sites while permitting inhibition at polar sites. This ensures cell division at the proper site by restricting the formation of a division septum at the midpoint of the long axis of the cell. This Tolumonas auensis (strain DSM 9187 / NBRC 110442 / TA 4) protein is Cell division topological specificity factor.